Reading from the N-terminus, the 180-residue chain is Thiol:disulfide interchange protein TxlA homolog (180 aa).

A helical membrane pass occupies residues 10-26 (LLAVVAIALSAAVYLGF). Positions 34 to 143 (SLEAQAQRAI…LEQNITALVA (110 aa)) constitute a Thioredoxin domain. The cysteines at positions 64 and 67 are disulfide-linked.

The protein belongs to the thioredoxin family.

Its subcellular location is the cell membrane. Required for disulfide bond formation in some proteins. Acts by transferring its disulfide bond to other proteins and is reduced in the process. The chain is Thiol:disulfide interchange protein TxlA homolog (txlA) from Synechocystis sp. (strain ATCC 27184 / PCC 6803 / Kazusa).